We begin with the raw amino-acid sequence, 205 residues long: Protease (205 aa).

Residues His-54, Asp-71, and Cys-120 contribute to the active site.

Belongs to the peptidase C5 family. As to quaternary structure, interacts with protease cofactor pVI-C; this interaction is necessary for protease activation.

It localises to the virion. It is found in the host nucleus. It catalyses the reaction Cleaves proteins of the adenovirus and its host cell at two consensus sites: -Yaa-Xaa-Gly-Gly-|-Xaa- and -Yaa-Xaa-Gly-Xaa-|-Gly- (in which Yaa is Met, Ile or Leu, and Xaa is any amino acid).. With respect to regulation, requires DNA and protease cofactor for maximal activation. Inside nascent virions, becomes partially activated by binding to the viral DNA, allowing it to cleave the cofactor that binds to the protease and fully activates it. Actin, like the viral protease cofactor, seems to act as a cofactor in the cleavage of cytokeratin 18 and of actin itself. Its function is as follows. Cleaves viral precursor proteins (pTP, pIIIa, pVI, pVII, pVIII, and pX) inside newly assembled particles giving rise to mature virions. Protease complexed to its cofactor slides along the viral DNA to specifically locate and cleave the viral precursors. Mature virions have a weakened organization compared to the unmature virions, thereby facilitating subsequent uncoating. Without maturation, the particle lacks infectivity and is unable to uncoat. Late in adenovirus infection, in the cytoplasm, may participate in the cytoskeleton destruction. Cleaves host cell cytoskeletal keratins K7 and K18. This Bos taurus (Bovine) protein is Protease.